Consider the following 593-residue polypeptide: DEAD-box ATP-dependent RNA helicase 18 (593 aa).

Residues 16-44 carry the Q motif motif; sequence FSDLEPPLSGDIIEALNQSDFEFCTPVQA. The Helicase ATP-binding domain occupies 47-226; that stretch reads IPLLCSYKDV…KAGLRNPVRV (180 aa). 60–67 is an ATP binding site; that stretch reads AATGSGKT. The DEAD box motif lies at 174 to 177; it reads DEAD. The Helicase C-terminal domain maps to 264–411; that stretch reads QLVDLLIKNS…ERKCSEDASD (148 aa). Residues 506 to 524 are compositionally biased toward basic and acidic residues; the sequence is QRQQNLQVRKEKRQEEKKE. The interval 506–561 is disordered; that stretch reads QRQQNLQVRKEKRQEEKKEKGKRKRVDASASNDPKKASRKLTGKQRQTIQTAEDEE.

The protein belongs to the DEAD box helicase family. DDX55/SPB4 subfamily.

It catalyses the reaction ATP + H2O = ADP + phosphate + H(+). The polypeptide is DEAD-box ATP-dependent RNA helicase 18 (RH18) (Arabidopsis thaliana (Mouse-ear cress)).